The chain runs to 396 residues: Elongation factor Tu 2 (396 aa).

Positions 10–206 (KLHVNVGTIG…ALDTFIPDPT (197 aa)) constitute a tr-type G domain. The tract at residues 19–26 (GHVDHGKT) is G1. A GTP-binding site is contributed by 19 to 26 (GHVDHGKT). Mg(2+) is bound at residue Thr-26. The tract at residues 60 to 64 (GITIS) is G2. The G3 stretch occupies residues 81–84 (DCPG). Residues 81 to 85 (DCPGH) and 136 to 139 (NKAD) each bind GTP. A G4 region spans residues 136 to 139 (NKAD). Residues 174–176 (SAR) are G5.

It belongs to the TRAFAC class translation factor GTPase superfamily. Classic translation factor GTPase family. EF-Tu/EF-1A subfamily. As to quaternary structure, monomer.

It localises to the cytoplasm. The catalysed reaction is GTP + H2O = GDP + phosphate + H(+). In terms of biological role, GTP hydrolase that promotes the GTP-dependent binding of aminoacyl-tRNA to the A-site of ribosomes during protein biosynthesis. The protein is Elongation factor Tu 2 of Xanthomonas campestris pv. campestris (strain 8004).